We begin with the raw amino-acid sequence, 281 residues long: NADH--cytochrome b5 reductase 1 (281 aa).

The chain crosses the membrane as a helical span at residues 13-33 (ILLGVFVAFVAVGAGAAYFLT). The AKR2A-binding sequence (ABS) required for mitochondrion outer membrane targeting motif lies at 34 to 40 (SSKKRRV). An FAD-binding FR-type domain is found at 45 to 149 (ENFKEFKLVK…KGPKGRFKYQ (105 aa)). FAD contacts are provided by residues 129-144 (REMR…GPKG) and 155-187 (AFGM…KVHL). A Phosphothreonine modification is found at threonine 166.

The protein belongs to the flavoprotein pyridine nucleotide cytochrome reductase family. In terms of assembly, monomer. Interacts with AKR2A. FAD serves as cofactor. Expressed in roots, stems, flowers and siliques. Detected in leaves.

The protein resides in the mitochondrion outer membrane. The catalysed reaction is 2 Fe(III)-[cytochrome b5] + NADH = 2 Fe(II)-[cytochrome b5] + NAD(+) + H(+). Reductase transferring electrons from NADH to cytochrome b5. Required for the NADH-dependent electron transfer involved in the desaturation and hydroxylation of fatty acids and in the desaturation of sterol precursors. No activity with NADPH as electron donor. In Arabidopsis thaliana (Mouse-ear cress), this protein is NADH--cytochrome b5 reductase 1.